We begin with the raw amino-acid sequence, 134 residues long: Protein NrdI (134 aa).

Belongs to the NrdI family.

Its function is as follows. Probably involved in ribonucleotide reductase function. The protein is Protein NrdI of Rhizobium etli (strain CIAT 652).